Consider the following 129-residue polypeptide: Small ribosomal subunit protein uS8 (129 aa).

Belongs to the universal ribosomal protein uS8 family. As to quaternary structure, part of the 30S ribosomal subunit. Contacts proteins S5 and S12.

Its function is as follows. One of the primary rRNA binding proteins, it binds directly to 16S rRNA central domain where it helps coordinate assembly of the platform of the 30S subunit. The chain is Small ribosomal subunit protein uS8 from Dichelobacter nodosus (strain VCS1703A).